The following is a 115-amino-acid chain: MGVPSGLILCVLIGAFFISMAAAGDSGAYDWVMPARSGGGCKGSIGECIAEEEEFELDSESNRRILATKKYISYGALQKNSVPCSRRGASYYNCKPGAQANPYSRGCSAITRCRS.

A signal peptide spans methionine 1–alanine 23. A propeptide spans glycine 24 to leucine 66 (removed in mature form). Cystine bridges form between cysteine 84–cysteine 94 and cysteine 107–cysteine 113.

In terms of processing, proteolytically cleaved, probably by S1P, a subtilisin-like serine protease (subtilase).

The protein localises to the secreted. Its function is as follows. Cell signaling peptide that may regulate plant stress, growth, and development. Mediates a rapid alkalinization of extracellular space by mediating a transient increase in the cytoplasmic Ca(2+) concentration leading to a calcium-dependent signaling events through a cell surface receptor and a concomitant activation of some intracellular mitogen-activated protein kinases. Prevents root growth and seedling development in heterologous system. This Nicotiana tabacum (Common tobacco) protein is Rapid alkalinization factor (RALF).